Reading from the N-terminus, the 1210-residue chain is Histone-lysine N-methyltransferase EHMT2 (1210 aa).

Positions 1 to 23 (MAAAAGAAAAAAAEGEAPAEMGA) are enriched in low complexity. 2 disordered regions span residues 1 to 262 (MAAA…LEEW) and 280 to 386 (DERV…EYME). Residue alanine 2 is modified to N-acetylalanine. A compositionally biased stretch (basic and acidic residues) spans 26-38 (LEKETRGATERVH). Serine 40 is modified (phosphoserine). Phosphothreonine is present on threonine 44. Serine 47 carries the phosphoserine modification. Positions 105–128 (GRILLGHATKSFPSSPSKGGSCPS) are enriched in low complexity. The residue at position 140 (serine 140) is a Phosphoserine. The segment covering 155-165 (PGAQGAAAAGS) has biased composition (low complexity). Residue serine 173 is modified to Phosphoserine. Lysine 185 carries the N6,N6,N6-trimethyllysine; by EHMT2; alternate modification. Residue lysine 185 is modified to N6,N6-dimethyllysine; by EHMT2; alternate. Positions 198-216 (PEKRPPEIQHFRMSDDVHS) are enriched in basic and acidic residues. Residues lysine 219 and lysine 229 each participate in a glycyl lysine isopeptide (Lys-Gly) (interchain with G-Cter in SUMO2) cross-link. A phosphoserine mark is found at serine 232, serine 242, and serine 246. A compositionally biased stretch (basic and acidic residues) spans 280–291 (DERVDSDSKSEV). Positions 298-327 (LSEEEEEEEEEEEEEEEEEEEEEEEEDEES) are enriched in acidic residues. A compositionally biased stretch (basic residues) spans 338-347 (GRRKAKKKWR). Phosphoserine occurs at positions 350, 412, and 413. The disordered stretch occupies residues 548-608 (IPRGDGVTPP…LADTIDSSGP (61 aa)). Threonine 555 is modified (phosphothreonine). Serine 569 is subject to Phosphoserine. Residue lysine 634 forms a Glycyl lysine isopeptide (Lys-Gly) (interchain with G-Cter in SUMO2) linkage. ANK repeat units follow at residues 649 to 678 (FHPRQLYLSVKQGELQKVILMLLDNLDPNF), 684 to 713 (SKRTPLHAAAQKGSVEICHVLLQAGANINA), 717 to 746 (QQRTPLMEAVVNNHLEVARYMVQRGGCVYS), 750 to 780 (DGSTCLHHAAKIGNLEMVSLLLSTGQVDVNA), 784 to 813 (GGWTPIIWAAEHKHIEVIRMLLTRGADVTL), 817 to 846 (EENICLHWASFTGSAAIAEVLLNARCDLHA), and 850 to 879 (HGDTPLHIAARESYHDCVLLFLSRGANPEL). The histone H3K9me binding stretch occupies residues 817-819 (EEN). Residues 972–1035 (QHCTCVDDCS…NCKNRVVQSG (64 aa)) form the Pre-SET domain. Cysteine 974, cysteine 976, cysteine 980, cysteine 985, cysteine 987, cysteine 1017, cysteine 1021, cysteine 1023, and cysteine 1027 together coordinate Zn(2+). The SET domain occupies 1038 to 1155 (VRLQLYRTAK…TGEELGFDYG (118 aa)). S-adenosyl-L-methionine-binding positions include 1048–1050 (MGW), tyrosine 1085, and 1112–1113 (NH). The tract at residues 1074–1093 (DAEADVREDDSYLFDLDNKD) is interaction with histone H3. Cysteine 1115 is a Zn(2+) binding site. Residues 1154–1157 (YGDR) form an interaction with histone H3 region. The region spanning 1164–1180 (KYFTCQCGSEKCKHSAE) is the Post-SET domain. Residue cysteine 1168 participates in Zn(2+) binding. Glutamine 1169 contacts S-adenosyl-L-methionine. The Zn(2+) site is built by cysteine 1170 and cysteine 1175. Serine 1204 bears the Phosphoserine mark. Threonine 1210 bears the Phosphothreonine mark.

It belongs to the class V-like SAM-binding methyltransferase superfamily. Histone-lysine methyltransferase family. Suvar3-9 subfamily. As to quaternary structure, heterodimer; heterodimerizes with EHMT1/GLP. Interacts with GFI1B and WIZ. Part of the E2F6.com-1 complex in G0 phase composed of E2F6, MGA, MAX, TFDP1, CBX3, BAT8, EHMT1, RING1, RNF2, MBLR, L3MBTL2 and YAF2. Part of a complex composed of TRIM28, HDAC1, HDAC2 and EHMT2. Interacts with UHRF1. Interacts with CDYL. Interacts with REST only in the presence of CDYL. Part of a complex containing at least CDYL, REST, WIZ, SETB1, EHMT1 and EHMT2. Interacts with PRDM9 and CDYL; interaction only takes place when PRDM9 is bound to hotspot DNA. Interacts with SMYD5. Methylated at Lys-185; automethylated. As to expression, expressed in all tissues examined, with high levels in fetal liver, thymus, lymph node, spleen and peripheral blood leukocytes and lower level in bone marrow.

The protein resides in the nucleus. It is found in the chromosome. The catalysed reaction is N(6)-methyl-L-lysyl(9)-[histone H3] + S-adenosyl-L-methionine = N(6),N(6)-dimethyl-L-lysyl(9)-[histone H3] + S-adenosyl-L-homocysteine + H(+). It carries out the reaction L-lysyl(9)-[histone H3] + S-adenosyl-L-methionine = N(6)-methyl-L-lysyl(9)-[histone H3] + S-adenosyl-L-homocysteine + H(+). Its function is as follows. Histone methyltransferase that specifically mono- and dimethylates 'Lys-9' of histone H3 (H3K9me1 and H3K9me2, respectively) in euchromatin. H3K9me represents a specific tag for epigenetic transcriptional repression by recruiting HP1 proteins to methylated histones. Also mediates monomethylation of 'Lys-56' of histone H3 (H3K56me1) in G1 phase, leading to promote interaction between histone H3 and PCNA and regulating DNA replication. Also weakly methylates 'Lys-27' of histone H3 (H3K27me). Also required for DNA methylation, the histone methyltransferase activity is not required for DNA methylation, suggesting that these 2 activities function independently. Probably targeted to histone H3 by different DNA-binding proteins like E2F6, MGA, MAX and/or DP1. May also methylate histone H1. In addition to the histone methyltransferase activity, also methylates non-histone proteins: mediates dimethylation of 'Lys-373' of p53/TP53. Also methylates CDYL, WIZ, ACIN1, DNMT1, HDAC1, ERCC6, KLF12 and itself. The chain is Histone-lysine N-methyltransferase EHMT2 (EHMT2) from Homo sapiens (Human).